We begin with the raw amino-acid sequence, 314 residues long: Methionyl-tRNA formyltransferase (314 aa).

Position 113-116 (113-116 (SLLP)) interacts with (6S)-5,6,7,8-tetrahydrofolate.

This sequence belongs to the Fmt family.

The catalysed reaction is L-methionyl-tRNA(fMet) + (6R)-10-formyltetrahydrofolate = N-formyl-L-methionyl-tRNA(fMet) + (6S)-5,6,7,8-tetrahydrofolate + H(+). Functionally, attaches a formyl group to the free amino group of methionyl-tRNA(fMet). The formyl group appears to play a dual role in the initiator identity of N-formylmethionyl-tRNA by promoting its recognition by IF2 and preventing the misappropriation of this tRNA by the elongation apparatus. The polypeptide is Methionyl-tRNA formyltransferase (Pseudomonas savastanoi pv. phaseolicola (strain 1448A / Race 6) (Pseudomonas syringae pv. phaseolicola (strain 1448A / Race 6))).